Consider the following 234-residue polypeptide: 7-cyano-7-deazaguanine synthase (234 aa).

Residue 7 to 17 (LSGGLDSAVCM) participates in ATP binding. Positions 197, 208, 211, and 214 each coordinate Zn(2+).

This sequence belongs to the QueC family. It depends on Zn(2+) as a cofactor.

The enzyme catalyses 7-carboxy-7-deazaguanine + NH4(+) + ATP = 7-cyano-7-deazaguanine + ADP + phosphate + H2O + H(+). The protein operates within purine metabolism; 7-cyano-7-deazaguanine biosynthesis. Functionally, catalyzes the ATP-dependent conversion of 7-carboxy-7-deazaguanine (CDG) to 7-cyano-7-deazaguanine (preQ(0)). The sequence is that of 7-cyano-7-deazaguanine synthase from Methanococcus aeolicus (strain ATCC BAA-1280 / DSM 17508 / OCM 812 / Nankai-3).